Reading from the N-terminus, the 175-residue chain is Translation initiation factor IF-3 (175 aa).

The protein belongs to the IF-3 family. In terms of assembly, monomer.

It is found in the cytoplasm. IF-3 binds to the 30S ribosomal subunit and shifts the equilibrium between 70S ribosomes and their 50S and 30S subunits in favor of the free subunits, thus enhancing the availability of 30S subunits on which protein synthesis initiation begins. The sequence is that of Translation initiation factor IF-3 from Staphylococcus epidermidis (strain ATCC 35984 / DSM 28319 / BCRC 17069 / CCUG 31568 / BM 3577 / RP62A).